The primary structure comprises 89 residues: Putative regulatory protein MAE_11840 (89 aa).

Belongs to the RemA family.

The protein is Putative regulatory protein MAE_11840 of Microcystis aeruginosa (strain NIES-843 / IAM M-2473).